The following is a 454-amino-acid chain: tRNA modification GTPase MnmE (454 aa).

(6S)-5-formyl-5,6,7,8-tetrahydrofolate is bound by residues Arg23, Glu80, and Lys120. Residues 216–377 (GMKVVIAGKP…LRTHLKQSMG (162 aa)) form the TrmE-type G domain. Asn226 contacts K(+). GTP contacts are provided by residues 226–231 (NAGKSS), 245–251 (TAIAGTT), 270–273 (DTAG), and 335–338 (NKAD). Ser230 is a binding site for Mg(2+). Thr245, Ile247, and Thr250 together coordinate K(+). Thr251 serves as a coordination point for Mg(2+). Lys454 provides a ligand contact to (6S)-5-formyl-5,6,7,8-tetrahydrofolate.

This sequence belongs to the TRAFAC class TrmE-Era-EngA-EngB-Septin-like GTPase superfamily. TrmE GTPase family. Homodimer. Heterotetramer of two MnmE and two MnmG subunits. It depends on K(+) as a cofactor.

It localises to the cytoplasm. In terms of biological role, exhibits a very high intrinsic GTPase hydrolysis rate. Involved in the addition of a carboxymethylaminomethyl (cmnm) group at the wobble position (U34) of certain tRNAs, forming tRNA-cmnm(5)s(2)U34. This is tRNA modification GTPase MnmE from Sodalis glossinidius (strain morsitans).